The sequence spans 360 residues: Aminomethyltransferase (360 aa).

This sequence belongs to the GcvT family. The glycine cleavage system is composed of four proteins: P, T, L and H.

The catalysed reaction is N(6)-[(R)-S(8)-aminomethyldihydrolipoyl]-L-lysyl-[protein] + (6S)-5,6,7,8-tetrahydrofolate = N(6)-[(R)-dihydrolipoyl]-L-lysyl-[protein] + (6R)-5,10-methylene-5,6,7,8-tetrahydrofolate + NH4(+). Its function is as follows. The glycine cleavage system catalyzes the degradation of glycine. This chain is Aminomethyltransferase, found in Legionella pneumophila (strain Paris).